A 97-amino-acid polypeptide reads, in one-letter code: Co-chaperonin GroES (97 aa).

This sequence belongs to the GroES chaperonin family. Heptamer of 7 subunits arranged in a ring. Interacts with the chaperonin GroEL.

It is found in the cytoplasm. Functionally, together with the chaperonin GroEL, plays an essential role in assisting protein folding. The GroEL-GroES system forms a nano-cage that allows encapsulation of the non-native substrate proteins and provides a physical environment optimized to promote and accelerate protein folding. GroES binds to the apical surface of the GroEL ring, thereby capping the opening of the GroEL channel. In Aeromonas salmonicida (strain A449), this protein is Co-chaperonin GroES.